The chain runs to 101 residues: Small ribosomal subunit protein uS14 (101 aa).

It belongs to the universal ribosomal protein uS14 family. Part of the 30S ribosomal subunit. Contacts proteins S3 and S10.

Its function is as follows. Binds 16S rRNA, required for the assembly of 30S particles and may also be responsible for determining the conformation of the 16S rRNA at the A site. In Brucella anthropi (strain ATCC 49188 / DSM 6882 / CCUG 24695 / JCM 21032 / LMG 3331 / NBRC 15819 / NCTC 12168 / Alc 37) (Ochrobactrum anthropi), this protein is Small ribosomal subunit protein uS14.